A 352-amino-acid polypeptide reads, in one-letter code: C5a anaphylatoxin chemotactic receptor 1 (352 aa).

Over 1–38 the chain is Extracellular; that stretch reads MASMNFSPPEYPDYGTATLDPNIFVDESLNTPKLSVPD. Sulfotyrosine occurs at positions 11 and 14. A helical membrane pass occupies residues 39–65; the sequence is MIALVIFVMVFLVGVPGNFLVVWVTGF. Over 66–70 the chain is Cytoplasmic; it reads EVRRT. Residues 71–94 traverse the membrane as a helical segment; the sequence is INAIWFLNLAVADLLSCLALPILF. At 95-111 the chain is on the extracellular side; sequence SSIVQQGYWPFGNAACR. A disulfide bridge links Cys-110 with Cys-189. A helical transmembrane segment spans residues 112 to 133; it reads ILPSLILLNMYASILLLTTISA. Over 134–154 the chain is Cytoplasmic; sequence DRFVLVFNPIWCQNYRGPQLA. The chain crosses the membrane as a helical span at residues 155-175; the sequence is WAACSVAWAVALLLTVPSFIF. Over 176 to 202 the chain is Extracellular; that stretch reads RGVHTEYFPFWMTCGVDYSGVGVLVER. A helical transmembrane segment spans residues 203 to 228; it reads GVAILRLLMGFLGPLVILSICYTFLL. Over 229–244 the chain is Cytoplasmic; it reads IRTWSRKATRSTKTLK. The chain crosses the membrane as a helical span at residues 245–267; the sequence is VVVAVVVSFFVLWLPYQVTGMMM. Residues 268-284 lie on the Extracellular side of the membrane; that stretch reads ALFYKHSESFRRVSRLD. A helical membrane pass occupies residues 285–305; it reads SLCVAVAYINCCINPIIYVLA. The Cytoplasmic portion of the chain corresponds to 306 to 352; that stretch reads AQGFHSRFLKSLPARLRQVLAEESVGRDSKSITLSTVDTPAQKSQGV. A phosphoserine mark is found at Ser-316, Ser-329, Ser-334, Ser-336, and Ser-340.

This sequence belongs to the G-protein coupled receptor 1 family. Homodimer. May also form higher-order oligomers. Interacts (when phosphorylated) with ARRB1 and ARRB2; the interaction is associated with internalization of C5aR. Post-translationally, sulfation plays a critical role in the association of C5aR with C5a, but no significant role in the ability of the receptor to transduce a signal and mobilize calcium in response to a small peptide agonist. In terms of processing, phosphorylated on serine residues in response to C5a binding, resulting in internalization of the receptor and short-term desensitization to C5a.

It localises to the cell membrane. It is found in the cytoplasmic vesicle. In terms of biological role, receptor for the chemotactic and inflammatory peptide anaphylatoxin C5a. The ligand interacts with at least two sites on the receptor: a high-affinity site on the extracellular N-terminus, and a second site in the transmembrane region which activates downstream signaling events. Receptor activation stimulates chemotaxis, granule enzyme release, intracellular calcium release and superoxide anion production. This is C5a anaphylatoxin chemotactic receptor 1 (C5AR1) from Canis lupus familiaris (Dog).